The following is an 85-amino-acid chain: MAHKKGGGTTRNGRDSESKRLGVKVYGGQAINAGGIIVRQRGTKMHPGENVGIGKDHTLFALTDGKVAFVTKGALQRHYVTVVPA.

Positions 1-21 are disordered; sequence MAHKKGGGTTRNGRDSESKRL.

This sequence belongs to the bacterial ribosomal protein bL27 family.

In Janthinobacterium sp. (strain Marseille) (Minibacterium massiliensis), this protein is Large ribosomal subunit protein bL27.